Consider the following 426-residue polypeptide: Eukaryotic translation initiation factor 3 subunit M (426 aa).

Residues 179-350 (DDEDSYRYLI…KVFLVHRTTY (172 aa)) form the PCI domain. Residues 385 to 401 (DVEGQREREQQELERKL) show a composition bias toward basic and acidic residues. A disordered region spans residues 385–426 (DVEGQREREQQELERKLAGAGMGGGPGGDRRRQQKPRTDEDD).

The protein belongs to the eIF-3 subunit M family. Component of the eukaryotic translation initiation factor 3 (eIF-3) complex.

It localises to the cytoplasm. Component of the eukaryotic translation initiation factor 3 (eIF-3) complex, which is involved in protein synthesis of a specialized repertoire of mRNAs and, together with other initiation factors, stimulates binding of mRNA and methionyl-tRNAi to the 40S ribosome. The eIF-3 complex specifically targets and initiates translation of a subset of mRNAs involved in cell proliferation. The chain is Eukaryotic translation initiation factor 3 subunit M from Chaetomium globosum (strain ATCC 6205 / CBS 148.51 / DSM 1962 / NBRC 6347 / NRRL 1970) (Soil fungus).